We begin with the raw amino-acid sequence, 295 residues long: Bifunctional protein FolD (295 aa).

Residues Gly-164–Ser-166, Ser-193, and Ile-234 contribute to the NADP(+) site.

This sequence belongs to the tetrahydrofolate dehydrogenase/cyclohydrolase family. In terms of assembly, homodimer.

The catalysed reaction is (6R)-5,10-methylene-5,6,7,8-tetrahydrofolate + NADP(+) = (6R)-5,10-methenyltetrahydrofolate + NADPH. It catalyses the reaction (6R)-5,10-methenyltetrahydrofolate + H2O = (6R)-10-formyltetrahydrofolate + H(+). Its pathway is one-carbon metabolism; tetrahydrofolate interconversion. Functionally, catalyzes the oxidation of 5,10-methylenetetrahydrofolate to 5,10-methenyltetrahydrofolate and then the hydrolysis of 5,10-methenyltetrahydrofolate to 10-formyltetrahydrofolate. The polypeptide is Bifunctional protein FolD (Flavobacterium johnsoniae (strain ATCC 17061 / DSM 2064 / JCM 8514 / BCRC 14874 / CCUG 350202 / NBRC 14942 / NCIMB 11054 / UW101) (Cytophaga johnsonae)).